The primary structure comprises 740 residues: Ribosomal protein S6 kinase alpha-3 (740 aa).

The tract at residues 1 to 38 (MPLAQLADPWQKMAVESPSDSAENGQQIMDEPMGEEEI) is disordered. Residues 18 to 27 (PSDSAENGQQ) show a composition bias toward polar residues. A Protein kinase 1 domain is found at 68–327 (FELLKVLGQG…VEEIKRHSFF (260 aa)). Residues 74–82 (LGQGSFGKV) and Lys-100 each bind ATP. Residue Asp-193 is the Proton acceptor of the active site. Position 227 is a phosphoserine; by PDPK1 (Ser-227). The AGC-kinase C-terminal domain maps to 328-397 (STIDWNKLYR…VAITSDDESQ (70 aa)). The residue at position 365 (Thr-365) is a Phosphothreonine. Phosphoserine is present on residues Ser-369 and Ser-375. Phosphoserine; by autocatalysis and MAPKAPK2 is present on Ser-386. Ser-415 is subject to Phosphoserine. In terms of domain architecture, Protein kinase 2 spans 422–679 (YEVKEDIGVG…AALVLRHPWI (258 aa)). Residues 428-436 (IGVGSYSVC) and Lys-451 each bind ATP. Tyr-529 is subject to Phosphotyrosine; by FGFR3. Asp-539 (proton acceptor) is an active-site residue. Ser-556 and Ser-715 each carry phosphoserine.

It belongs to the protein kinase superfamily. AGC Ser/Thr protein kinase family. S6 kinase subfamily. Forms a complex with either MAPK1/ERK2 or MAPK3/ERK1 in quiescent cells. Transiently dissociates following mitogenic stimulation. Interacts with NFATC4, ETV1/ER81 and FGFR1. The cofactor is Mg(2+). In terms of processing, activated by phosphorylation at Ser-227 by PDPK1. Autophosphorylated on Ser-386, as part of the activation process. May be phosphorylated at Thr-365 and Ser-369 by MAPK1/ERK2 and MAPK3/ERK1. Can also be activated via phosphorylation at Ser-386 by MAPKAPK2. Post-translationally, N-terminal myristoylation results in an activated kinase in the absence of added growth factors. In terms of tissue distribution, expressed in many tissues, highest levels in skeletal muscle.

The protein localises to the nucleus. The protein resides in the cytoplasm. The catalysed reaction is L-seryl-[protein] + ATP = O-phospho-L-seryl-[protein] + ADP + H(+). The enzyme catalyses L-threonyl-[protein] + ATP = O-phospho-L-threonyl-[protein] + ADP + H(+). Its activity is regulated as follows. Upon extracellular signal or mitogen stimulation, phosphorylated at Thr-577 in the C-terminal kinase domain (CTKD) by MAPK1/ERK2 and MAPK3/ERK1. The activated CTKD then autophosphorylates Ser-386, allowing binding of PDPK1, which in turn phosphorylates Ser-227 in the N-terminal kinase domain (NTDK) leading to the full activation of the protein and subsequent phosphorylation of the substrates by the NTKD. In terms of biological role, serine/threonine-protein kinase that acts downstream of ERK (MAPK1/ERK2 and MAPK3/ERK1) signaling and mediates mitogenic and stress-induced activation of the transcription factors CREB1, ETV1/ER81 and NR4A1/NUR77, regulates translation through RPS6 and EIF4B phosphorylation, and mediates cellular proliferation, survival, and differentiation by modulating mTOR signaling and repressing pro-apoptotic function of BAD and DAPK1. In fibroblast, is required for EGF-stimulated phosphorylation of CREB1 and histone H3 at 'Ser-10', which results in the subsequent transcriptional activation of several immediate-early genes. In response to mitogenic stimulation (EGF and PMA), phosphorylates and activates NR4A1/NUR77 and ETV1/ER81 transcription factors and the cofactor CREBBP. Upon insulin-derived signal, acts indirectly on the transcription regulation of several genes by phosphorylating GSK3B at 'Ser-9' and inhibiting its activity. Phosphorylates RPS6 in response to serum or EGF via an mTOR-independent mechanism and promotes translation initiation by facilitating assembly of the preinitiation complex. In response to insulin, phosphorylates EIF4B, enhancing EIF4B affinity for the EIF3 complex and stimulating cap-dependent translation. Is involved in the mTOR nutrient-sensing pathway by directly phosphorylating TSC2 at 'Ser-1798', which potently inhibits TSC2 ability to suppress mTOR signaling, and mediates phosphorylation of RPTOR, which regulates mTORC1 activity and may promote rapamycin-sensitive signaling independently of the PI3K/AKT pathway. Mediates cell survival by phosphorylating the pro-apoptotic proteins BAD and DAPK1 and suppressing their pro-apoptotic function. Promotes the survival of hepatic stellate cells by phosphorylating CEBPB in response to the hepatotoxin carbon tetrachloride (CCl4). Is involved in cell cycle regulation by phosphorylating the CDK inhibitor CDKN1B, which promotes CDKN1B association with 14-3-3 proteins and prevents its translocation to the nucleus and inhibition of G1 progression. In LPS-stimulated dendritic cells, is involved in TLR4-induced macropinocytosis, and in myeloma cells, acts as effector of FGFR3-mediated transformation signaling, after direct phosphorylation at Tyr-529 by FGFR3. Negatively regulates EGF-induced MAPK1/3 phosphorylation via phosphorylation of SOS1. Phosphorylates SOS1 at 'Ser-1134' and 'Ser-1161' that create YWHAB and YWHAE binding sites and which contribute to the negative regulation of MAPK1/3 phosphorylation. Phosphorylates EPHA2 at 'Ser-897', the RPS6KA-EPHA2 signaling pathway controls cell migration. Acts as a regulator of osteoblast differentiation by mediating phosphorylation of ATF4, thereby promoting ATF4 transactivation activity. The sequence is that of Ribosomal protein S6 kinase alpha-3 (RPS6KA3) from Homo sapiens (Human).